The chain runs to 209 residues: High frequency lysogenization protein HflD homolog (209 aa).

The protein belongs to the HflD family.

The protein resides in the cytoplasm. It localises to the cell inner membrane. The sequence is that of High frequency lysogenization protein HflD homolog from Sodalis glossinidius (strain morsitans).